We begin with the raw amino-acid sequence, 329 residues long: Glycerol-3-phosphate dehydrogenase [NAD(P)+] (329 aa).

NADPH is bound by residues W11, R30, and K103. K103, G132, and S134 together coordinate sn-glycerol 3-phosphate. A136 is a binding site for NADPH. Residues K187, D240, S250, R251, and N252 each contribute to the sn-glycerol 3-phosphate site. K187 serves as the catalytic Proton acceptor. R251 contacts NADPH. V275 and E277 together coordinate NADPH.

Belongs to the NAD-dependent glycerol-3-phosphate dehydrogenase family.

It localises to the cytoplasm. It carries out the reaction sn-glycerol 3-phosphate + NAD(+) = dihydroxyacetone phosphate + NADH + H(+). It catalyses the reaction sn-glycerol 3-phosphate + NADP(+) = dihydroxyacetone phosphate + NADPH + H(+). It participates in membrane lipid metabolism; glycerophospholipid metabolism. Its function is as follows. Catalyzes the reduction of the glycolytic intermediate dihydroxyacetone phosphate (DHAP) to sn-glycerol 3-phosphate (G3P), the key precursor for phospholipid synthesis. In Methylobacillus flagellatus (strain ATCC 51484 / DSM 6875 / VKM B-1610 / KT), this protein is Glycerol-3-phosphate dehydrogenase [NAD(P)+].